Consider the following 308-residue polypeptide: Mycothiol acetyltransferase (308 aa).

N-acetyltransferase domains lie at 12–149 and 165–308; these read DVLD…RPLG and VTVR…RTET. Glu-43 is a 1D-myo-inositol 2-(L-cysteinylamino)-2-deoxy-alpha-D-glucopyranoside binding site. 88 to 90 is a binding site for acetyl-CoA; the sequence is LVV. Positions 192, 231, and 240 each coordinate 1D-myo-inositol 2-(L-cysteinylamino)-2-deoxy-alpha-D-glucopyranoside. Acetyl-CoA-binding positions include 244–246 and 251–257; these read VGV and QGGGLGR. Residue Tyr-278 coordinates 1D-myo-inositol 2-(L-cysteinylamino)-2-deoxy-alpha-D-glucopyranoside.

It belongs to the acetyltransferase family. MshD subfamily. In terms of assembly, monomer.

The catalysed reaction is 1D-myo-inositol 2-(L-cysteinylamino)-2-deoxy-alpha-D-glucopyranoside + acetyl-CoA = mycothiol + CoA + H(+). Functionally, catalyzes the transfer of acetyl from acetyl-CoA to desacetylmycothiol (Cys-GlcN-Ins) to form mycothiol. This Streptomyces bingchenggensis (strain BCW-1) protein is Mycothiol acetyltransferase.